A 400-amino-acid polypeptide reads, in one-letter code: Enoyl-[acyl-carrier-protein] reductase [NADH] (400 aa).

NAD(+) is bound by residues 48–53 (GSSSGY), 74–75 (FE), 111–112 (DA), and 139–140 (LA). Tyr-225 lines the substrate pocket. Tyr-235 (proton donor) is an active-site residue. NAD(+)-binding positions include Lys-244 and 273–275 (VVT).

Belongs to the TER reductase family. As to quaternary structure, monomer.

The enzyme catalyses a 2,3-saturated acyl-[ACP] + NAD(+) = a (2E)-enoyl-[ACP] + NADH + H(+). It functions in the pathway lipid metabolism; fatty acid biosynthesis. Involved in the final reduction of the elongation cycle of fatty acid synthesis (FAS II). Catalyzes the reduction of a carbon-carbon double bond in an enoyl moiety that is covalently linked to an acyl carrier protein (ACP). The polypeptide is Enoyl-[acyl-carrier-protein] reductase [NADH] (Aliivibrio fischeri (strain MJ11) (Vibrio fischeri)).